We begin with the raw amino-acid sequence, 315 residues long: Methionyl-tRNA formyltransferase (315 aa).

Positions 2–189 (SESLRIIFAG…LITTLKQLAD (188 aa)) are N-terminal domain. 113-116 (SLLP) is a (6S)-5,6,7,8-tetrahydrofolate binding site. The C-terminal domain stretch occupies residues 210 to 315 (KEEARIDWSL…EWFVPGNRLA (106 aa)).

It belongs to the Fmt family.

The catalysed reaction is L-methionyl-tRNA(fMet) + (6R)-10-formyltetrahydrofolate = N-formyl-L-methionyl-tRNA(fMet) + (6S)-5,6,7,8-tetrahydrofolate + H(+). Functionally, attaches a formyl group to the free amino group of methionyl-tRNA(fMet). The formyl group appears to play a dual role in the initiator identity of N-formylmethionyl-tRNA by promoting its recognition by IF2 and preventing the misappropriation of this tRNA by the elongation apparatus. In Escherichia coli O6:H1 (strain CFT073 / ATCC 700928 / UPEC), this protein is Methionyl-tRNA formyltransferase.